A 541-amino-acid chain; its full sequence is Peptidyl-prolyl isomerase cwc-27 (541 aa).

In terms of domain architecture, PPIase cyclophilin-type spans P11 to I193. 2 disordered regions span residues D199–D443 and T513–H541. Composition is skewed to basic and acidic residues over residues A279–R307, Q316–E348, and I361–A374. Acidic residues predominate over residues D432–A442. Basic and acidic residues-rich tracts occupy residues T513–K525 and A532–H541.

This sequence belongs to the cyclophilin-type PPIase family. CWC27 subfamily. Associated with the spliceosome.

It localises to the cytoplasm. The protein resides in the nucleus. It catalyses the reaction [protein]-peptidylproline (omega=180) = [protein]-peptidylproline (omega=0). In terms of biological role, PPIases accelerate the folding of proteins. It catalyzes the cis-trans isomerization of proline imidic peptide bonds in oligopeptides. Involved in pre-mRNA splicing. The chain is Peptidyl-prolyl isomerase cwc-27 (cwc-27) from Neurospora crassa (strain ATCC 24698 / 74-OR23-1A / CBS 708.71 / DSM 1257 / FGSC 987).